The primary structure comprises 357 residues: MPRRDRNMDSAPCMWMRGGTSKGGYFLRADLPADTAARDAFLLAVMGSPDPRQIDGMGGADPLTSKVAVVSKSERPGIDVDYLFLQVFVDQAIVTDAQNCGNILAGVGPFAIERGLVAASGDETRVAIFMENTGQVAVATVRTPGGSVTYAGDAAIDGVPGTHAPIPTEFRDTAGSSCGALLPSGNAVDVVNGLPVTLIDNGMPCVVMKAADVGITGYEDRDSLDANAELKAKIEAIRLAVGELMNLGDVTEKSVPKMMLVAPPRDGGAVCVRSFIPHRAHATIGVLGAVSVATACLIPGSPAAEVAVVPEGARKTLSIEHPTGEMSCVLEVDDAGNVVSAALLRTARKLMDGVVFV.

It belongs to the PrpF family.

It carries out the reaction (1E)-4-oxobut-1-ene-1,2,4-tricarboxylate = (3Z)-2-oxo-4-carboxy-3-hexenedioate. Its pathway is secondary metabolite metabolism; lignin degradation. In terms of biological role, contributes to the degradation of lignin at the level of the protocatechuate 4,5-cleavage pathway. Catalyzes the isomerization of the double bond between C4 and C5 in (4E)-oxalomesaconate (OMA) to (3Z)-2-keto-4-carboxy-3-hexenedioate (KCH), where the double bond has migrated between C3 and C4 via a 1,3-allylic isomerization. This Novosphingobium sp. (strain KA1) (Sphingomonas sp. (strain KA1)) protein is (4E)-oxalomesaconate Delta-isomerase.